A 118-amino-acid chain; its full sequence is uncharacterized protein (118 aa).

The protein to S.pombe tam6.

It is found in the mitochondrion. This is an uncharacterized protein from Saccharomyces cerevisiae (strain ATCC 204508 / S288c) (Baker's yeast).